Reading from the N-terminus, the 380-residue chain is Glucose-1-phosphate adenylyltransferase (380 aa).

Alpha-D-glucose 1-phosphate is bound by residues G164, 179–180, and S190; that span reads EK.

It belongs to the bacterial/plant glucose-1-phosphate adenylyltransferase family. In terms of assembly, homotetramer.

It catalyses the reaction alpha-D-glucose 1-phosphate + ATP + H(+) = ADP-alpha-D-glucose + diphosphate. It functions in the pathway glycan biosynthesis; glycogen biosynthesis. Involved in the biosynthesis of ADP-glucose, a building block required for the elongation reactions to produce glycogen. Catalyzes the reaction between ATP and alpha-D-glucose 1-phosphate (G1P) to produce pyrophosphate and ADP-Glc. The sequence is that of Glucose-1-phosphate adenylyltransferase from Streptococcus pneumoniae (strain Hungary19A-6).